Consider the following 608-residue polypeptide: Kinetochore protein NUF2 (608 aa).

Residues 121–125 are required for nuclear localization and function; the sequence is IGNLR. 2 coiled-coil regions span residues 176–319 and 358–460; these read FESQ…QQKL and REKL…IEEE.

Belongs to the NUF2 family.

It is found in the chromosome. Its subcellular location is the centromere. The protein resides in the kinetochore. Functionally, required for anchoring centrosomal cores to the nuclear periphery. Plays a role in chromosome segregation but is dispensable for centromere clustering. The protein is Kinetochore protein NUF2 of Toxoplasma gondii (strain ATCC 50611 / Me49).